Reading from the N-terminus, the 112-residue chain is Protein Churchill (112 aa).

Residues Cys-2, Cys-5, Cys-30, Cys-33, His-59, Cys-61, Cys-64, His-66, His-71, Cys-88, and Cys-91 each coordinate Zn(2+).

The protein belongs to the Churchill family.

Transcriptional activator that mediates FGF signaling during neural development. Plays a role in the regulation of cell movement. Does not bind DNA by itself. The protein is Protein Churchill (Churc1) of Mus musculus (Mouse).